A 355-amino-acid polypeptide reads, in one-letter code: Protein RecA (355 aa).

Residue 78 to 85 (GPESSGKT) participates in ATP binding.

Belongs to the RecA family.

Its subcellular location is the cytoplasm. Can catalyze the hydrolysis of ATP in the presence of single-stranded DNA, the ATP-dependent uptake of single-stranded DNA by duplex DNA, and the ATP-dependent hybridization of homologous single-stranded DNAs. It interacts with LexA causing its activation and leading to its autocatalytic cleavage. The protein is Protein RecA of Rhodobacter capsulatus (Rhodopseudomonas capsulata).